The chain runs to 133 residues: ATP synthase epsilon chain, chloroplastic (133 aa).

The protein belongs to the ATPase epsilon chain family. F-type ATPases have 2 components, CF(1) - the catalytic core - and CF(0) - the membrane proton channel. CF(1) has five subunits: alpha(3), beta(3), gamma(1), delta(1), epsilon(1). CF(0) has three main subunits: a, b and c.

It localises to the plastid. Its subcellular location is the chloroplast thylakoid membrane. Functionally, produces ATP from ADP in the presence of a proton gradient across the membrane. This chain is ATP synthase epsilon chain, chloroplastic, found in Lactuca sativa (Garden lettuce).